A 185-amino-acid polypeptide reads, in one-letter code: Ribosome-recycling factor (185 aa).

It belongs to the RRF family.

The protein resides in the cytoplasm. Its function is as follows. Responsible for the release of ribosomes from messenger RNA at the termination of protein biosynthesis. May increase the efficiency of translation by recycling ribosomes from one round of translation to another. This Shewanella pealeana (strain ATCC 700345 / ANG-SQ1) protein is Ribosome-recycling factor.